A 217-amino-acid polypeptide reads, in one-letter code: Dual specificity phosphatase 29 (217 aa).

The Tyrosine-protein phosphatase domain occupies 46–194; it reads HVNEVWPNLY…LRELDIKLAL (149 aa). 138–145 contacts substrate; it reads HCAMGRSR. The active-site Phosphocysteine intermediate is C139.

Belongs to the protein-tyrosine phosphatase family. Non-receptor class dual specificity subfamily.

The protein localises to the cytoplasm. It is found in the nucleus. It carries out the reaction O-phospho-L-tyrosyl-[protein] + H2O = L-tyrosyl-[protein] + phosphate. The catalysed reaction is O-phospho-L-seryl-[protein] + H2O = L-seryl-[protein] + phosphate. It catalyses the reaction O-phospho-L-threonyl-[protein] + H2O = L-threonyl-[protein] + phosphate. In terms of biological role, dual specificity phosphatase able to dephosphorylate phosphotyrosine, phosphoserine and phosphothreonine residues within the same substrate, with a preference for phosphotyrosine as a substrate. Involved in the modulation of AMPK and MAPK1/2 signaling pathways. The polypeptide is Dual specificity phosphatase 29 (DUSP29) (Anolis carolinensis (Green anole)).